The chain runs to 361 residues: Cytochrome P450 family protein EryCII (361 aa).

The protein belongs to the cytochrome P450 family. In terms of assembly, heterotetramer composed of EryCII and EryCIII.

The protein operates within antibiotic biosynthesis; erythromycin biosynthesis. Its function is as follows. Involved in the erythromycin biosynthesis pathway. Acts by forming a complex and stabilizing the desosaminyl transferase EryCIII. The protein is Cytochrome P450 family protein EryCII (eryCII) of Saccharopolyspora erythraea (strain ATCC 11635 / DSM 40517 / JCM 4748 / NBRC 13426 / NCIMB 8594 / NRRL 2338).